The chain runs to 421 residues: Shaggy-related protein kinase kappa (421 aa).

A compositionally biased stretch (gly residues) spans 1–10; it reads MASSGLGNGV. Residues 1-60 form a disordered region; sequence MASSGLGNGVGTSRSAKGLKSSSSSVDWLTRDLAETRIRDKVETDDERDSEPDIIDGAGA. Positions 29–42 are enriched in basic and acidic residues; the sequence is LTRDLAETRIRDKV. Acidic residues predominate over residues 43-54; it reads ETDDERDSEPDI. The Protein kinase domain occupies 83–367; sequence YISEHVVGTG…ALEACIHPLF (285 aa). ATP-binding positions include 89–97 and lysine 112; that span reads VGTGSFGMV. Catalysis depends on aspartate 208, which acts as the Proton acceptor. Phosphotyrosine is present on tyrosine 243.

Belongs to the protein kinase superfamily. CMGC Ser/Thr protein kinase family. GSK-3 subfamily. In terms of processing, autophosphorylated mainly on threonine and serine residues. In terms of tissue distribution, expressed exclusively in inflorescences.

It catalyses the reaction L-seryl-[protein] + ATP = O-phospho-L-seryl-[protein] + ADP + H(+). It carries out the reaction L-threonyl-[protein] + ATP = O-phospho-L-threonyl-[protein] + ADP + H(+). Its function is as follows. May mediate extracellular signals to regulate transcription in differentiating cells. The sequence is that of Shaggy-related protein kinase kappa (ASK10) from Arabidopsis thaliana (Mouse-ear cress).